The primary structure comprises 141 residues: Glutathione transferase FosA (141 aa).

The region spanning 4–117 (SLNHLTLAVS…DGHKLELHVG (114 aa)) is the VOC domain. Residues His7, His67, and Glu113 each contribute to the Mn(2+) site.

It belongs to the fosfomycin resistance protein family. In terms of assembly, homodimer. The cofactor is Mn(2+).

The protein localises to the cytoplasm. It catalyses the reaction RX + glutathione = an S-substituted glutathione + a halide anion + H(+). Its activity is regulated as follows. Requires the monovalent cation K(+) for optimal activity. Metalloglutathione transferase which confers resistance to fosfomycin by catalyzing the addition of glutathione to fosfomycin. The chain is Glutathione transferase FosA (fosA) from Serratia marcescens.